The chain runs to 101 residues: Urease subunit beta (101 aa).

It belongs to the urease beta subunit family. As to quaternary structure, heterotrimer of UreA (gamma), UreB (beta) and UreC (alpha) subunits. Three heterotrimers associate to form the active enzyme.

It localises to the cytoplasm. The catalysed reaction is urea + 2 H2O + H(+) = hydrogencarbonate + 2 NH4(+). It participates in nitrogen metabolism; urea degradation; CO(2) and NH(3) from urea (urease route): step 1/1. This Pseudomonas fluorescens (strain ATCC BAA-477 / NRRL B-23932 / Pf-5) protein is Urease subunit beta.